The following is a 419-amino-acid chain: L-rhamnose isomerase (419 aa).

Mn(2+)-binding residues include H262, D294, and D296.

It belongs to the rhamnose isomerase family. As to quaternary structure, homotetramer. The cofactor is Mn(2+).

It is found in the cytoplasm. It catalyses the reaction L-rhamnopyranose = L-rhamnulose. Its pathway is carbohydrate degradation; L-rhamnose degradation; glycerone phosphate from L-rhamnose: step 1/3. Functionally, catalyzes the interconversion of L-rhamnose and L-rhamnulose. This Escherichia coli (strain SMS-3-5 / SECEC) protein is L-rhamnose isomerase.